The sequence spans 31 residues: Photosystem I reaction center subunit XII (31 aa).

A helical transmembrane segment spans residues 7–26 (QISIILLIALIPAFFSLKLG).

The protein belongs to the PsaM family.

Its subcellular location is the plastid. The protein localises to the chloroplast thylakoid membrane. This is Photosystem I reaction center subunit XII from Euglena myxocylindracea.